A 547-amino-acid polypeptide reads, in one-letter code: Glucose-6-phosphate isomerase (547 aa).

Glu-351 acts as the Proton donor in catalysis. Active-site residues include His-382 and Lys-510.

The protein belongs to the GPI family.

It localises to the cytoplasm. The enzyme catalyses alpha-D-glucose 6-phosphate = beta-D-fructose 6-phosphate. It functions in the pathway carbohydrate biosynthesis; gluconeogenesis. It participates in carbohydrate degradation; glycolysis; D-glyceraldehyde 3-phosphate and glycerone phosphate from D-glucose: step 2/4. Functionally, catalyzes the reversible isomerization of glucose-6-phosphate to fructose-6-phosphate. The polypeptide is Glucose-6-phosphate isomerase (Saccharophagus degradans (strain 2-40 / ATCC 43961 / DSM 17024)).